The primary structure comprises 102 residues: Large ribosomal subunit protein uL24 (102 aa).

This sequence belongs to the universal ribosomal protein uL24 family. As to quaternary structure, part of the 50S ribosomal subunit.

Functionally, one of two assembly initiator proteins, it binds directly to the 5'-end of the 23S rRNA, where it nucleates assembly of the 50S subunit. One of the proteins that surrounds the polypeptide exit tunnel on the outside of the subunit. This chain is Large ribosomal subunit protein uL24, found in Lysinibacillus sphaericus (strain C3-41).